Consider the following 485-residue polypeptide: Phosphoglucosamine mutase (485 aa).

The active-site Phosphoserine intermediate is the S133. Mg(2+)-binding residues include S133, D274, D276, and D278. Residue S133 is modified to Phosphoserine.

Belongs to the phosphohexose mutase family. Requires Mg(2+) as cofactor. In terms of processing, activated by phosphorylation.

The catalysed reaction is alpha-D-glucosamine 1-phosphate = D-glucosamine 6-phosphate. Its function is as follows. Catalyzes the conversion of glucosamine-6-phosphate to glucosamine-1-phosphate. This chain is Phosphoglucosamine mutase, found in Rippkaea orientalis (strain PCC 8801 / RF-1) (Cyanothece sp. (strain PCC 8801)).